The following is a 285-amino-acid chain: HTH-type transcriptional regulator MurR (285 aa).

The HTH rpiR-type domain maps to 1–77 (MLYLTKISNA…MALIGEYSAS (77 aa)). Positions 37–56 (SRQMAKQLGISQSSIVKFAQ) form a DNA-binding region, H-T-H motif. The SIS domain occupies 128–268 (IIEVISKAPF…FVGLVQLNDV (141 aa)).

As to quaternary structure, homotetramer.

It functions in the pathway amino-sugar metabolism; N-acetylmuramate degradation [regulation]. In terms of biological role, represses the expression of the murPQ operon involved in the uptake and degradation of N-acetylmuramic acid (MurNAc). Binds to two adjacent inverted repeats within the operator region. MurNAc 6-phosphate, the substrate of MurQ, is the specific inducer that weakens binding of MurR to the operator. This is HTH-type transcriptional regulator MurR from Escherichia coli O139:H28 (strain E24377A / ETEC).